Reading from the N-terminus, the 504-residue chain is Catalase (504 aa).

The tract at residues 1–25 (MSKQDGKLTGLFGAPVSDRENSMTA) is disordered. Catalysis depends on residues histidine 56 and asparagine 129. Tyrosine 339 is a binding site for heme.

It belongs to the catalase family. In terms of assembly, homodimer. Requires heme as cofactor.

It carries out the reaction 2 H2O2 = O2 + 2 H2O. In terms of biological role, decomposes hydrogen peroxide into water and oxygen; serves to protect cells from the toxic effects of hydrogen peroxide. The polypeptide is Catalase (katA) (Staphylococcus epidermidis (strain ATCC 35984 / DSM 28319 / BCRC 17069 / CCUG 31568 / BM 3577 / RP62A)).